A 230-amino-acid chain; its full sequence is Type II restriction enzyme SinI (230 aa).

It carries out the reaction Endonucleolytic cleavage of DNA to give specific double-stranded fragments with terminal 5'-phosphates.. In terms of biological role, a P subtype restriction enzyme that recognizes the double-stranded sequence 5'-GGWCC-3' and cleaves after G-1. This is Type II restriction enzyme SinI (sinIR) from Salmonella infantis.